Here is a 324-residue protein sequence, read N- to C-terminus: N-acetyl-gamma-glutamyl-phosphate reductase (324 aa).

Residue Cys-131 is part of the active site.

The protein belongs to the NAGSA dehydrogenase family. Type 1 subfamily.

It is found in the cytoplasm. It catalyses the reaction N-acetyl-L-glutamate 5-semialdehyde + phosphate + NADP(+) = N-acetyl-L-glutamyl 5-phosphate + NADPH + H(+). It functions in the pathway amino-acid biosynthesis; L-arginine biosynthesis; N(2)-acetyl-L-ornithine from L-glutamate: step 3/4. Catalyzes the NADPH-dependent reduction of N-acetyl-5-glutamyl phosphate to yield N-acetyl-L-glutamate 5-semialdehyde. This is N-acetyl-gamma-glutamyl-phosphate reductase from Bradyrhizobium sp. (strain BTAi1 / ATCC BAA-1182).